We begin with the raw amino-acid sequence, 39 residues long: Photosystem II reaction center protein J (39 aa).

A helical transmembrane segment spans residues 9-29 (LWLVATVGGIAAITVLGIFIY).

It belongs to the PsbJ family. As to quaternary structure, PSII is composed of 1 copy each of membrane proteins PsbA, PsbB, PsbC, PsbD, PsbE, PsbF, PsbH, PsbI, PsbJ, PsbK, PsbL, PsbM, PsbT, PsbX, PsbY, PsbZ, Psb30/Ycf12, at least 3 peripheral proteins of the oxygen-evolving complex and a large number of cofactors. It forms dimeric complexes.

It localises to the plastid. The protein resides in the chloroplast thylakoid membrane. Its function is as follows. One of the components of the core complex of photosystem II (PSII). PSII is a light-driven water:plastoquinone oxidoreductase that uses light energy to abstract electrons from H(2)O, generating O(2) and a proton gradient subsequently used for ATP formation. It consists of a core antenna complex that captures photons, and an electron transfer chain that converts photonic excitation into a charge separation. The polypeptide is Photosystem II reaction center protein J (Pyropia yezoensis (Susabi-nori)).